Consider the following 276-residue polypeptide: Radial spoke head protein 9 homolog (276 aa).

This sequence belongs to the flagellar radial spoke RSP9 family. In terms of assembly, component of the axonemal radial spoke 1 (RS1) and 2 (RS2) complexes, at least composed of spoke head proteins RSPH1, RSPH3, RSPH9 and the cilia-specific component RSPH4A or sperm-specific component RSPH6A, spoke stalk proteins RSPH14, DNAJB13, DYDC1, ROPN1L and NME5, and the RS1 complex-specific anchor protein IQUB. Interacts with IQUB. Interacts with RSPH3B. Interacts with RSPH4A. Interacts with RSPH6A. Interacts with CFAP61. Interacts with LRRC23.

The protein localises to the cytoplasm. It localises to the cytoskeleton. Its subcellular location is the cilium axoneme. It is found in the flagellum axoneme. The protein resides in the cell projection. The protein localises to the kinocilium. Its function is as follows. Functions as part of axonemal radial spoke complexes that play an important part in the motility of sperm and cilia. Essential for both the radial spoke head assembly and the central pair microtubule stability in ependymal motile cilia. Required for motility of olfactory and neural cilia and for the structural integrity of ciliary axonemes in both 9+0 and 9+2 motile cilia. In Bos taurus (Bovine), this protein is Radial spoke head protein 9 homolog (RSPH9).